The primary structure comprises 518 residues: Golgi-associated olfactory signaling regulator (518 aa).

The N-terminal stretch at 1–19 (MKSFSRILFLVFLLAGLRS) is a signal peptide. The Extracellular segment spans residues 20 to 409 (KAAPSAPLPL…GRPRGAAGGA (390 aa)). Residues 38-377 (HPSETSPLKG…ATLRAPQRHS (340 aa)) form a disordered region. Residues 92–106 (DLRETPHPESPETPK) are compositionally biased toward basic and acidic residues. A glycan (N-linked (GlcNAc...) asparagine) is linked at Asn124. The span at 138 to 153 (TPGPTEMPHPGSPETP) shows a compositional bias: pro residues. Residue Asn156 is glycosylated (N-linked (GlcNAc...) asparagine). 2 stretches are compositionally biased toward polar residues: residues 168 to 180 (TPNTDLMQTTPQE) and 187 to 207 (LNATEVSQAELPETSNTNPTK). N-linked (GlcNAc...) asparagine glycosylation is found at Asn188 and Asn220. 2 stretches are compositionally biased toward basic and acidic residues: residues 209–220 (PDPKSPEKHDLN) and 236–247 (DPSKTPHPESHV). Polar residues-rich tracts occupy residues 248–270 (THNPSPTEISQTEFPTTYYQNAT) and 276–285 (SDPQISTSLY). N-linked (GlcNAc...) asparagine glycosylation occurs at Asn268. Residues 410 to 430 (LCLFFAGTALLIGIFVLLWCL) form a helical membrane-spanning segment. Residues 431–518 (YRRAARQRPF…SPATLPNNFV (88 aa)) are Cytoplasmic-facing. A disordered region spans residues 477-518 (HIATKQPPPTPPLPPKLPPPPRGGRPQRLEALSPATLPNNFV). Residues 482–499 (QPPPTPPLPPKLPPPPRG) show a composition bias toward pro residues.

It is found in the golgi apparatus membrane. Required for proper function of the olfactory system. May be involved in establishing the acuity of olfactory sensory signaling. The polypeptide is Golgi-associated olfactory signaling regulator (GFY) (Homo sapiens (Human)).